A 499-amino-acid chain; its full sequence is Glycerol kinase (499 aa).

Thr13 contacts ADP. ATP contacts are provided by Thr13, Thr14, and Ser15. Position 13 (Thr13) interacts with sn-glycerol 3-phosphate. Arg17 is an ADP binding site. Sn-glycerol 3-phosphate is bound by residues Arg83, Glu84, Tyr135, and Asp245. 5 residues coordinate glycerol: Arg83, Glu84, Tyr135, Asp245, and Gln246. 2 residues coordinate ADP: Thr267 and Gly310. Residues Thr267, Gly310, Gln314, and Ala411 each coordinate ATP. ADP is bound by residues Ala411 and Asn415.

Belongs to the FGGY kinase family.

It carries out the reaction glycerol + ATP = sn-glycerol 3-phosphate + ADP + H(+). It functions in the pathway polyol metabolism; glycerol degradation via glycerol kinase pathway; sn-glycerol 3-phosphate from glycerol: step 1/1. Its activity is regulated as follows. Inhibited by fructose 1,6-bisphosphate (FBP). Key enzyme in the regulation of glycerol uptake and metabolism. Catalyzes the phosphorylation of glycerol to yield sn-glycerol 3-phosphate. The protein is Glycerol kinase of Xylella fastidiosa (strain M12).